Consider the following 467-residue polypeptide: Asparagine--tRNA ligase (467 aa).

Belongs to the class-II aminoacyl-tRNA synthetase family. As to quaternary structure, homodimer.

The protein localises to the cytoplasm. It carries out the reaction tRNA(Asn) + L-asparagine + ATP = L-asparaginyl-tRNA(Asn) + AMP + diphosphate + H(+). This is Asparagine--tRNA ligase from Histophilus somni (strain 2336) (Haemophilus somnus).